Consider the following 538-residue polypeptide: Succinyl-CoA:acetate CoA-transferase (538 aa).

305–309 (GVGSV) contacts CoA. Catalysis depends on Glu330, which acts as the 5-glutamyl coenzyme A thioester intermediate. Residues Asn420 and Gly424 each contribute to the CoA site.

Belongs to the acetyl-CoA hydrolase/transferase family.

It catalyses the reaction succinyl-CoA + acetate = succinate + acetyl-CoA. Its function is as follows. Forms succinyl-CoA from succinate and acetyl-CoA. In Clostridium kluyveri (strain ATCC 8527 / DSM 555 / NBRC 12016 / NCIMB 10680 / K1), this protein is Succinyl-CoA:acetate CoA-transferase.